The following is a 567-amino-acid chain: Thiol:disulfide interchange protein DsbD (567 aa).

The signal sequence occupies residues methionine 1 to alanine 19. 2 cysteine pairs are disulfide-bonded: cysteine 122-cysteine 128 and cysteine 185-cysteine 307. A run of 8 helical transmembrane segments spans residues leucine 166–valine 186, leucine 211–valine 231, tyrosine 246–phenylalanine 266, isoleucine 299–isoleucine 319, tryptophan 326–valine 346, tryptophan 360–leucine 380, alanine 387–threonine 407, and isoleucine 418–alanine 438. The Thioredoxin domain maps to glutamine 435–proline 567. Cysteines 482 and 485 form a disulfide.

Belongs to the thioredoxin family. DsbD subfamily.

The protein localises to the cell inner membrane. The catalysed reaction is [protein]-dithiol + NAD(+) = [protein]-disulfide + NADH + H(+). It carries out the reaction [protein]-dithiol + NADP(+) = [protein]-disulfide + NADPH + H(+). Its function is as follows. Required to facilitate the formation of correct disulfide bonds in some periplasmic proteins and for the assembly of the periplasmic c-type cytochromes. Acts by transferring electrons from cytoplasmic thioredoxin to the periplasm. This transfer involves a cascade of disulfide bond formation and reduction steps. The polypeptide is Thiol:disulfide interchange protein DsbD (Salmonella paratyphi A (strain ATCC 9150 / SARB42)).